We begin with the raw amino-acid sequence, 327 residues long: Glycerol-3-phosphate dehydrogenase [NAD(P)+] (327 aa).

3 residues coordinate NADPH: W11, H30, and K103. Sn-glycerol 3-phosphate-binding residues include K103, G131, and S133. NADPH is bound at residue A135. The sn-glycerol 3-phosphate site is built by K186, D243, S253, R254, and N255. The active-site Proton acceptor is the K186. R254 is a binding site for NADPH. The NADPH site is built by V281 and E283.

This sequence belongs to the NAD-dependent glycerol-3-phosphate dehydrogenase family.

It localises to the cytoplasm. It carries out the reaction sn-glycerol 3-phosphate + NAD(+) = dihydroxyacetone phosphate + NADH + H(+). The catalysed reaction is sn-glycerol 3-phosphate + NADP(+) = dihydroxyacetone phosphate + NADPH + H(+). It participates in membrane lipid metabolism; glycerophospholipid metabolism. Catalyzes the reduction of the glycolytic intermediate dihydroxyacetone phosphate (DHAP) to sn-glycerol 3-phosphate (G3P), the key precursor for phospholipid synthesis. This is Glycerol-3-phosphate dehydrogenase [NAD(P)+] from Wolbachia pipientis wMel.